The sequence spans 163 residues: Nucleotide-binding protein SYNPCC7002_A1983 (163 aa).

Belongs to the YajQ family.

Functionally, nucleotide-binding protein. This is Nucleotide-binding protein SYNPCC7002_A1983 from Picosynechococcus sp. (strain ATCC 27264 / PCC 7002 / PR-6) (Agmenellum quadruplicatum).